We begin with the raw amino-acid sequence, 381 residues long: Erythronate-4-phosphate dehydrogenase (381 aa).

Substrate contacts are provided by serine 45 and threonine 66. NAD(+) is bound by residues aspartate 146, threonine 174, 205–207 (ASR), and aspartate 231. Residue arginine 207 is part of the active site. Glutamate 236 is a catalytic residue. Histidine 253 acts as the Proton donor in catalysis. Glycine 256 is a binding site for NAD(+). Tyrosine 257 lines the substrate pocket.

Belongs to the D-isomer specific 2-hydroxyacid dehydrogenase family. PdxB subfamily. As to quaternary structure, homodimer.

It is found in the cytoplasm. The enzyme catalyses 4-phospho-D-erythronate + NAD(+) = (R)-3-hydroxy-2-oxo-4-phosphooxybutanoate + NADH + H(+). Its pathway is cofactor biosynthesis; pyridoxine 5'-phosphate biosynthesis; pyridoxine 5'-phosphate from D-erythrose 4-phosphate: step 2/5. Functionally, catalyzes the oxidation of erythronate-4-phosphate to 3-hydroxy-2-oxo-4-phosphonooxybutanoate. The sequence is that of Erythronate-4-phosphate dehydrogenase from Stutzerimonas stutzeri (strain A1501) (Pseudomonas stutzeri).